Reading from the N-terminus, the 110-residue chain is Large ribosomal subunit protein uL22 (110 aa).

This sequence belongs to the universal ribosomal protein uL22 family. In terms of assembly, part of the 50S ribosomal subunit.

This protein binds specifically to 23S rRNA; its binding is stimulated by other ribosomal proteins, e.g. L4, L17, and L20. It is important during the early stages of 50S assembly. It makes multiple contacts with different domains of the 23S rRNA in the assembled 50S subunit and ribosome. In terms of biological role, the globular domain of the protein is located near the polypeptide exit tunnel on the outside of the subunit, while an extended beta-hairpin is found that lines the wall of the exit tunnel in the center of the 70S ribosome. This Buchnera aphidicola subsp. Acyrthosiphon pisum (strain 5A) protein is Large ribosomal subunit protein uL22.